The following is a 231-amino-acid chain: Putative carboxymethylenebutenolidase (231 aa).

Residues Cys118, Asp167, and His199 contribute to the active site.

Belongs to the dienelactone hydrolase family.

The catalysed reaction is 2-(5-oxo-2,5-dihydrofuran-2-ylidene)acetate + H2O = 4-oxohex-2-enedioate + H(+). The protein is Putative carboxymethylenebutenolidase of Aquifex aeolicus (strain VF5).